The primary structure comprises 329 residues: Ceramide synthase hyl-2 (329 aa).

N-linked (GlcNAc...) asparagine glycosylation occurs at Asn22. Transmembrane regions (helical) follow at residues 41–61 (VLTGISLIIYRFVFENYIFVP), 95–115 (ALYYTISFVCGLYLVLHESHL), 134–154 (VAWYYWIQGGFYIALVFGILF), 162–182 (FWQMLVHHFITLALIGVSWTM), 187–207 (VGTLILVSHDAVDILIDVGKI), 221–241 (FAGVLFVWVATRLVYYPFWII), and 270–290 (FIMLLLTALLILHIFWAYILF). One can recognise a TLC domain in the interval 86-298 (SRMAECAMRA…LFKIAYDTIQ (213 aa)).

This sequence belongs to the sphingosine N-acyltransferase family. As to expression, strong expression in the gut, the posterior bulb of the pharynx, the hypoderm, and unidentified cells of the head and the tail.

It localises to the membrane. It catalyses the reaction a very long-chain fatty acyl-CoA + a sphingoid base = an N-(very-long-chain fatty acyl)-sphingoid base + CoA + H(+). The enzyme catalyses a fatty acyl-CoA + sphinganine = an N-acylsphinganine + CoA + H(+). It carries out the reaction docosanoyl-CoA + sphinganine = N-docosanoylsphinganine + CoA + H(+). The catalysed reaction is sphinganine + tetradecanoyl-CoA = N-(tetradecanoyl)-sphinganine + CoA + H(+). It catalyses the reaction eicosanoyl-CoA + sphinganine = N-eicosanoylsphinganine + CoA + H(+). The enzyme catalyses 15-methylhexadecasphinganine + a fatty acyl-CoA = an N-acyl-15-methylhexadecasphinganine + CoA + H(+). It functions in the pathway lipid metabolism; sphingolipid metabolism. Its function is as follows. Catalyzes the acylation of sphingoid bases to form ceramides, which are key players in cell signaling events such as tolerances to heat, oxidation, and ultraviolet stress. C.elegans contain specific sphingoid bases, which are unique or different in structure compared to the sphingoid bases found in other animals. Two examples of these distinctive compounds are: 15-methylhexadecasphinganine and 15-methylhexadecasphing-4-enine. Exhibits substrate preference for long and very long fatty acyl-coA chains (C20-23). Required for adaptation of the nematode to anoxia. Anoxia tolerance may require one or more of the ceramide species that are either specifically or preferentially synthesized by HYL-2, and seems to be affected by a pathway that is parallel to that involving daf-2. This Caenorhabditis elegans protein is Ceramide synthase hyl-2 (hyl-2).